A 513-amino-acid polypeptide reads, in one-letter code: Bifunctional purine biosynthesis protein PurH (513 aa).

The MGS-like domain occupies 1 to 144 (MSKRALISVS…KNHERVGIVV (144 aa)).

The protein belongs to the PurH family.

It catalyses the reaction (6R)-10-formyltetrahydrofolate + 5-amino-1-(5-phospho-beta-D-ribosyl)imidazole-4-carboxamide = 5-formamido-1-(5-phospho-D-ribosyl)imidazole-4-carboxamide + (6S)-5,6,7,8-tetrahydrofolate. The catalysed reaction is IMP + H2O = 5-formamido-1-(5-phospho-D-ribosyl)imidazole-4-carboxamide. It functions in the pathway purine metabolism; IMP biosynthesis via de novo pathway; 5-formamido-1-(5-phospho-D-ribosyl)imidazole-4-carboxamide from 5-amino-1-(5-phospho-D-ribosyl)imidazole-4-carboxamide (10-formyl THF route): step 1/1. The protein operates within purine metabolism; IMP biosynthesis via de novo pathway; IMP from 5-formamido-1-(5-phospho-D-ribosyl)imidazole-4-carboxamide: step 1/1. In Moorella thermoacetica (strain ATCC 39073 / JCM 9320), this protein is Bifunctional purine biosynthesis protein PurH.